Reading from the N-terminus, the 241-residue chain is LexA repressor (241 aa).

The segment at residues 41–61 (FREIGNAAGLKSPSSVKHQLQ) is a DNA-binding region (H-T-H motif). Catalysis depends on for autocatalytic cleavage activity residues S165 and K202.

This sequence belongs to the peptidase S24 family. As to quaternary structure, homodimer.

The catalysed reaction is Hydrolysis of Ala-|-Gly bond in repressor LexA.. Represses a number of genes involved in the response to DNA damage (SOS response), including recA and lexA. In the presence of single-stranded DNA, RecA interacts with LexA causing an autocatalytic cleavage which disrupts the DNA-binding part of LexA, leading to derepression of the SOS regulon and eventually DNA repair. The chain is LexA repressor from Bifidobacterium longum (strain DJO10A).